The chain runs to 125 residues: Large ribosomal subunit protein bL12 (125 aa).

This sequence belongs to the bacterial ribosomal protein bL12 family. In terms of assembly, homodimer. Part of the ribosomal stalk of the 50S ribosomal subunit. Forms a multimeric L10(L12)X complex, where L10 forms an elongated spine to which 2 to 4 L12 dimers bind in a sequential fashion. Binds GTP-bound translation factors.

In terms of biological role, forms part of the ribosomal stalk which helps the ribosome interact with GTP-bound translation factors. Is thus essential for accurate translation. This chain is Large ribosomal subunit protein bL12, found in Alkalilimnicola ehrlichii (strain ATCC BAA-1101 / DSM 17681 / MLHE-1).